The primary structure comprises 156 residues: Ribosomal RNA large subunit methyltransferase H (156 aa).

S-adenosyl-L-methionine is bound by residues leucine 73, glycine 104, and 123–128 (VSSLTL).

The protein belongs to the RNA methyltransferase RlmH family. Homodimer.

The protein resides in the cytoplasm. It carries out the reaction pseudouridine(1915) in 23S rRNA + S-adenosyl-L-methionine = N(3)-methylpseudouridine(1915) in 23S rRNA + S-adenosyl-L-homocysteine + H(+). Functionally, specifically methylates the pseudouridine at position 1915 (m3Psi1915) in 23S rRNA. In Burkholderia thailandensis (strain ATCC 700388 / DSM 13276 / CCUG 48851 / CIP 106301 / E264), this protein is Ribosomal RNA large subunit methyltransferase H.